A 430-amino-acid chain; its full sequence is 3-phosphoshikimate 1-carboxyvinyltransferase (430 aa).

3-phosphoshikimate contacts are provided by lysine 25, serine 26, and arginine 30. Residue lysine 25 participates in phosphoenolpyruvate binding. The phosphoenolpyruvate site is built by glycine 98 and arginine 126. 3-phosphoshikimate contacts are provided by serine 169, serine 170, glutamine 171, serine 198, glutamate 313, and histidine 342. Glutamine 171 is a binding site for phosphoenolpyruvate. The active-site Proton acceptor is the glutamate 313. Residues arginine 346, arginine 387, and lysine 412 each contribute to the phosphoenolpyruvate site.

It belongs to the EPSP synthase family. Monomer.

It is found in the cytoplasm. The catalysed reaction is 3-phosphoshikimate + phosphoenolpyruvate = 5-O-(1-carboxyvinyl)-3-phosphoshikimate + phosphate. It functions in the pathway metabolic intermediate biosynthesis; chorismate biosynthesis; chorismate from D-erythrose 4-phosphate and phosphoenolpyruvate: step 6/7. Catalyzes the transfer of the enolpyruvyl moiety of phosphoenolpyruvate (PEP) to the 5-hydroxyl of shikimate-3-phosphate (S3P) to produce enolpyruvyl shikimate-3-phosphate and inorganic phosphate. In Mycobacterium leprae (strain TN), this protein is 3-phosphoshikimate 1-carboxyvinyltransferase.